The primary structure comprises 415 residues: S-inosyl-L-homocysteine hydrolase (415 aa).

Asp-123 and Glu-148 together coordinate substrate. 149–151 (TTT) contributes to the NAD(+) binding site. 2 residues coordinate substrate: Lys-178 and Asp-182. NAD(+) contacts are provided by residues Asn-183, 212–217 (GYGWCG), Glu-235, 291–293 (AGH), and Asn-337.

Belongs to the adenosylhomocysteinase family. In terms of assembly, exists both as a homotetramer and a homodimer, in a 4:1 ratio. NAD(+) is required as a cofactor.

Its subcellular location is the cytoplasm. It carries out the reaction S-inosyl-L-homocysteine + H2O = L-homocysteine + inosine. The protein operates within amino-acid biosynthesis; S-adenosyl-L-methionine biosynthesis. In terms of biological role, catalyzes the hydrolysis of S-inosyl-L-homocysteine (SIH) to L-homocysteine (Hcy) and inosine. Likely functions in a S-adenosyl-L-methionine (SAM) recycling pathway from S-adenosyl-L-homocysteine (SAH) produced from SAM-dependent methylation reactions. Can also catalyze the reverse reaction in vitro, i.e. the synthesis of SIH from Hcy and inosine. Is specific for SIH and inosine as it is unable to either hydrolyze SAH or synthesize SAH from adenosine and Hcy. This is S-inosyl-L-homocysteine hydrolase from Methanocaldococcus jannaschii (strain ATCC 43067 / DSM 2661 / JAL-1 / JCM 10045 / NBRC 100440) (Methanococcus jannaschii).